A 577-amino-acid polypeptide reads, in one-letter code: Aspartate--tRNA(Asp/Asn) ligase (577 aa).

Residue Glu171 participates in L-aspartate binding. The aspartate stretch occupies residues Gln195–Lys198. Residue Arg217 coordinates L-aspartate. Residues Arg217–Glu219 and Gln226 contribute to the ATP site. Residue His444 participates in L-aspartate binding. Glu474 is a binding site for ATP. Residue Arg481 participates in L-aspartate binding. An ATP-binding site is contributed by Gly526–Arg529.

It belongs to the class-II aminoacyl-tRNA synthetase family. Type 1 subfamily. As to quaternary structure, homodimer.

The protein localises to the cytoplasm. The enzyme catalyses tRNA(Asx) + L-aspartate + ATP = L-aspartyl-tRNA(Asx) + AMP + diphosphate. Functionally, aspartyl-tRNA synthetase with relaxed tRNA specificity since it is able to aspartylate not only its cognate tRNA(Asp) but also tRNA(Asn). Reaction proceeds in two steps: L-aspartate is first activated by ATP to form Asp-AMP and then transferred to the acceptor end of tRNA(Asp/Asn). The polypeptide is Aspartate--tRNA(Asp/Asn) ligase (Helicobacter pylori (strain P12)).